The sequence spans 209 residues: Large ribosomal subunit protein uL3 (209 aa).

The tract at residues 121-154 (GGIKRHNFHRGPMAHGSKYHRRPGSSAAKGPART) is disordered.

The protein belongs to the universal ribosomal protein uL3 family. Part of the 50S ribosomal subunit. Forms a cluster with proteins L14 and L19.

One of the primary rRNA binding proteins, it binds directly near the 3'-end of the 23S rRNA, where it nucleates assembly of the 50S subunit. In Desulforamulus reducens (strain ATCC BAA-1160 / DSM 100696 / MI-1) (Desulfotomaculum reducens), this protein is Large ribosomal subunit protein uL3.